A 288-amino-acid polypeptide reads, in one-letter code: NAD kinase (288 aa).

Aspartate 68 serves as the catalytic Proton acceptor. NAD(+) contacts are provided by residues 68 to 69 (DG), 142 to 143 (ND), arginine 153, aspartate 172, and glutamine 242.

The protein belongs to the NAD kinase family. The cofactor is a divalent metal cation.

It localises to the cytoplasm. It catalyses the reaction NAD(+) + ATP = ADP + NADP(+) + H(+). In terms of biological role, involved in the regulation of the intracellular balance of NAD and NADP, and is a key enzyme in the biosynthesis of NADP. Catalyzes specifically the phosphorylation on 2'-hydroxyl of the adenosine moiety of NAD to yield NADP. The chain is NAD kinase from Desulforamulus reducens (strain ATCC BAA-1160 / DSM 100696 / MI-1) (Desulfotomaculum reducens).